A 205-amino-acid polypeptide reads, in one-letter code: THO complex subunit 7 homolog (205 aa).

Residues 68–158 (AMNERETENY…KESLVSKLEL (91 aa)) adopt a coiled-coil conformation. The tract at residues 181–205 (KTDEGTALSPQQSITSPGKVALMDT) is disordered.

This sequence belongs to the THOC7 family. In terms of assembly, component of the THO subcomplex of the transcription/export (TREX) complex which seems to have a dynamic structure involving ATP-dependent remodeling.

It localises to the cytoplasm. It is found in the nucleus. The protein localises to the nucleus speckle. Functionally, may act as component of the THO subcomplex of the TREX complex which is thought to couple mRNA transcription, processing and nuclear export, and which specifically associates with spliced mRNA and not with unspliced pre-mRNA. The polypeptide is THO complex subunit 7 homolog (thoc7) (Nematostella vectensis (Starlet sea anemone)).